Reading from the N-terminus, the 209-residue chain is UPF0174 protein jhp_1493 (209 aa).

It belongs to the UPF0174 family.

The protein is UPF0174 protein jhp_1493 of Helicobacter pylori (strain J99 / ATCC 700824) (Campylobacter pylori J99).